The primary structure comprises 316 residues: MSKLDTFIQHAVNAVPVSGTSLISSLYGDSLSHRGGEIWLGSLAALLEGLGFGERFVRTALFRLNKEGWLDVSRIGRRSFYSLSDKGLRLTRRAESKIYRAEQPAWDGKWLLLLSEGLDKSTLADVKKQLIWQGFGALAPSLMASPSQKLADVQTLLHEAGVADNVICFEAQIPLALSRAALRARVEECWHLTEQNAMYETFIQSFRPLVPLLKEAADELTPERAFHIQLLLIHFYRRVVLKDPLLPEELLPAHWAGHTARQLCINIYQRVAPAALAFVSEKGETSVGELPAPGSLYFQRFGGLNIEQEALCQFIR.

It belongs to the PaaX family.

Its pathway is aromatic compound metabolism; phenylacetate degradation. Its function is as follows. Negative regulator of the paaZ and paaABCDEFGHIJK catabolic operons. Binds the consensus sequence 5'-WWTRTGATTCGYGWT-3'. Binding of PaaX is specifically inhibited by phenylacetyl-coenzyme A (PA-CoA). The sequence is that of Transcriptional repressor PaaX (paaX) from Escherichia coli (strain K12).